The sequence spans 247 residues: Carboxy-S-adenosyl-L-methionine synthase (247 aa).

Residues Y40, 65-67, 90-91, 122-123, N137, and R204 contribute to the S-adenosyl-L-methionine site; these read GSS, DN, and DI.

The protein belongs to the class I-like SAM-binding methyltransferase superfamily. Cx-SAM synthase family. Homodimer.

It catalyses the reaction prephenate + S-adenosyl-L-methionine = carboxy-S-adenosyl-L-methionine + 3-phenylpyruvate + H2O. Catalyzes the conversion of S-adenosyl-L-methionine (SAM) to carboxy-S-adenosyl-L-methionine (Cx-SAM). The protein is Carboxy-S-adenosyl-L-methionine synthase of Pseudomonas fluorescens (strain ATCC BAA-477 / NRRL B-23932 / Pf-5).